Reading from the N-terminus, the 372-residue chain is Queuine tRNA-ribosyltransferase (372 aa).

Asp-92 functions as the Proton acceptor in the catalytic mechanism. Substrate is bound by residues 92–96 (DSGGF), Asp-146, Gln-188, and Gly-215. The RNA binding stretch occupies residues 246–252 (GIGTLRE). The Nucleophile role is filled by Asp-265. The tract at residues 270–274 (TRLGR) is RNA binding; important for wobble base 34 recognition. Residues Cys-303, Cys-305, Cys-308, and His-334 each contribute to the Zn(2+) site.

This sequence belongs to the queuine tRNA-ribosyltransferase family. As to quaternary structure, homodimer. Within each dimer, one monomer is responsible for RNA recognition and catalysis, while the other monomer binds to the replacement base PreQ1. Zn(2+) serves as cofactor.

The catalysed reaction is 7-aminomethyl-7-carbaguanine + guanosine(34) in tRNA = 7-aminomethyl-7-carbaguanosine(34) in tRNA + guanine. It functions in the pathway tRNA modification; tRNA-queuosine biosynthesis. Functionally, catalyzes the base-exchange of a guanine (G) residue with the queuine precursor 7-aminomethyl-7-deazaguanine (PreQ1) at position 34 (anticodon wobble position) in tRNAs with GU(N) anticodons (tRNA-Asp, -Asn, -His and -Tyr). Catalysis occurs through a double-displacement mechanism. The nucleophile active site attacks the C1' of nucleotide 34 to detach the guanine base from the RNA, forming a covalent enzyme-RNA intermediate. The proton acceptor active site deprotonates the incoming PreQ1, allowing a nucleophilic attack on the C1' of the ribose to form the product. After dissociation, two additional enzymatic reactions on the tRNA convert PreQ1 to queuine (Q), resulting in the hypermodified nucleoside queuosine (7-(((4,5-cis-dihydroxy-2-cyclopenten-1-yl)amino)methyl)-7-deazaguanosine). This is Queuine tRNA-ribosyltransferase from Synechococcus sp. (strain CC9902).